Consider the following 262-residue polypeptide: Ribosomal RNA small subunit methyltransferase A (262 aa).

The S-adenosyl-L-methionine site is built by His-16, Leu-18, Gly-43, Glu-64, Asp-89, and Asn-109.

Belongs to the class I-like SAM-binding methyltransferase superfamily. rRNA adenine N(6)-methyltransferase family. RsmA subfamily.

The protein localises to the cytoplasm. The catalysed reaction is adenosine(1518)/adenosine(1519) in 16S rRNA + 4 S-adenosyl-L-methionine = N(6)-dimethyladenosine(1518)/N(6)-dimethyladenosine(1519) in 16S rRNA + 4 S-adenosyl-L-homocysteine + 4 H(+). In terms of biological role, specifically dimethylates two adjacent adenosines (A1518 and A1519) in the loop of a conserved hairpin near the 3'-end of 16S rRNA in the 30S particle. May play a critical role in biogenesis of 30S subunits. This is Ribosomal RNA small subunit methyltransferase A from Xanthomonas oryzae pv. oryzae (strain MAFF 311018).